The sequence spans 115 residues: Meromycolate extension acyl carrier protein (115 aa).

The Carrier domain maps to 3-81 (VTQEEIIAGI…DVVAYIQKLE (79 aa)). Residue Ser41 is modified to O-(pantetheine 4'-phosphoryl)serine.

It belongs to the acyl carrier protein (ACP) family. 4'-phosphopantetheine is transferred from CoA to a specific serine of apo-AcpM.

Its subcellular location is the cytoplasm. Functionally, acyl carrier protein involved in meromycolate extension. The polypeptide is Meromycolate extension acyl carrier protein (acpM) (Mycobacterium bovis (strain ATCC BAA-935 / AF2122/97)).